Consider the following 146-residue polypeptide: D-aminoacyl-tRNA deacylase (146 aa).

A Gly-cisPro motif, important for rejection of L-amino acids motif is present at residues 137–138 (GP).

It belongs to the DTD family. As to quaternary structure, homodimer.

It localises to the cytoplasm. The catalysed reaction is glycyl-tRNA(Ala) + H2O = tRNA(Ala) + glycine + H(+). The enzyme catalyses a D-aminoacyl-tRNA + H2O = a tRNA + a D-alpha-amino acid + H(+). Its function is as follows. An aminoacyl-tRNA editing enzyme that deacylates mischarged D-aminoacyl-tRNAs. Also deacylates mischarged glycyl-tRNA(Ala), protecting cells against glycine mischarging by AlaRS. Acts via tRNA-based rather than protein-based catalysis; rejects L-amino acids rather than detecting D-amino acids in the active site. By recycling D-aminoacyl-tRNA to D-amino acids and free tRNA molecules, this enzyme counteracts the toxicity associated with the formation of D-aminoacyl-tRNA entities in vivo and helps enforce protein L-homochirality. This is D-aminoacyl-tRNA deacylase from Desulfatibacillum aliphaticivorans.